The sequence spans 99 residues: Integration host factor subunit alpha (99 aa).

It belongs to the bacterial histone-like protein family. Heterodimer of an alpha and a beta chain.

In terms of biological role, this protein is one of the two subunits of integration host factor, a specific DNA-binding protein that functions in genetic recombination as well as in transcriptional and translational control. The sequence is that of Integration host factor subunit alpha from Thioalkalivibrio sulfidiphilus (strain HL-EbGR7).